The following is a 293-amino-acid chain: Chorion protein S36 (293 aa).

The signal sequence occupies residues 1–20 (MQLGLWFGLFAVAAAPLVSA). Positions 235-253 (QSYGQPQAYNQPQAYSQPQ) are enriched in polar residues. The disordered stretch occupies residues 235-293 (QSYGQPQAYNQPQAYSQPQSYGNSGSSGAGNSGPSSDSYAAGAETPLYASPAPYGSPSY).

Belongs to the chorion protein S36 family.

The protein resides in the secreted. Chorion membrane (egg shell) protein; protects the egg from the environment. This Drosophila virilis (Fruit fly) protein is Chorion protein S36 (Cp36).